A 303-amino-acid polypeptide reads, in one-letter code: 2-dehydropantoate 2-reductase (303 aa).

NADP(+)-binding positions include 7–12 (GCGALG), Asn-98, and Ala-122. Asn-98 contributes to the substrate binding site. Catalysis depends on Lys-176, which acts as the Proton donor. Substrate-binding residues include Asn-180, Asn-184, Asn-194, and Ser-244. Glu-256 contributes to the NADP(+) binding site.

This sequence belongs to the ketopantoate reductase family. Monomer.

It is found in the cytoplasm. The catalysed reaction is (R)-pantoate + NADP(+) = 2-dehydropantoate + NADPH + H(+). Its pathway is cofactor biosynthesis; (R)-pantothenate biosynthesis; (R)-pantoate from 3-methyl-2-oxobutanoate: step 2/2. Its function is as follows. Catalyzes the NADPH-dependent reduction of ketopantoate into pantoic acid. Has a strong preference for NADPH over NADH as the electron acceptor. Pantoate, ketoisovalerate, oxaloacetate, pyruvate, 3-hydroxypyruvate, alpha-ketoglutarate, alpha-ketobutyrate, and acetaldehyde cannot serve as substrates for reduction. The chain is 2-dehydropantoate 2-reductase from Salmonella typhimurium (strain LT2 / SGSC1412 / ATCC 700720).